We begin with the raw amino-acid sequence, 313 residues long: MANRKIVVALGGNAILSKDASAEAQQAALRETAKSLVSLVKENEKLIITHGNGPQVGNLLLQQMIGSTKSNPAMPIDTAVSMTEGSIGYWMQNAMDDVLEDEGIDKSAATVVTQVEVDANDSAFQNPSKPIGPFYEKEDINKIRELHPEYIYVEDAGRGYRRVVPSPKPVNVREYQVINSLVDNNVIPISVGGGGVPVVREGNHLIGCEAVIDKDFASEKLAELIKADLLIILTAVDNVYINFNKPDQKKLENVTVEELENYINENQFAKGSMLPKVQAAINFVNNGCGEAVVTSLKNINNFLQKGSGTIITK.

Belongs to the carbamate kinase family.

The protein localises to the cytoplasm. The catalysed reaction is hydrogencarbonate + NH4(+) + ATP = carbamoyl phosphate + ADP + H2O + H(+). The protein operates within metabolic intermediate metabolism; carbamoyl phosphate degradation; CO(2) and NH(3) from carbamoyl phosphate: step 1/1. The protein is Carbamate kinase (arcC) of Oenococcus oeni (Leuconostoc oenos).